The primary structure comprises 435 residues: Serine hydroxymethyltransferase (435 aa).

(6S)-5,6,7,8-tetrahydrofolate-binding positions include leucine 131 and 135-137 (GHL). Position 240 is an N6-(pyridoxal phosphate)lysine (lysine 240).

This sequence belongs to the SHMT family. As to quaternary structure, homodimer. It depends on pyridoxal 5'-phosphate as a cofactor.

Its subcellular location is the cytoplasm. The catalysed reaction is (6R)-5,10-methylene-5,6,7,8-tetrahydrofolate + glycine + H2O = (6S)-5,6,7,8-tetrahydrofolate + L-serine. It functions in the pathway one-carbon metabolism; tetrahydrofolate interconversion. It participates in amino-acid biosynthesis; glycine biosynthesis; glycine from L-serine: step 1/1. In terms of biological role, catalyzes the reversible interconversion of serine and glycine with tetrahydrofolate (THF) serving as the one-carbon carrier. This reaction serves as the major source of one-carbon groups required for the biosynthesis of purines, thymidylate, methionine, and other important biomolecules. Also exhibits THF-independent aldolase activity toward beta-hydroxyamino acids, producing glycine and aldehydes, via a retro-aldol mechanism. This Bifidobacterium longum subsp. infantis (strain ATCC 15697 / DSM 20088 / JCM 1222 / NCTC 11817 / S12) protein is Serine hydroxymethyltransferase.